The chain runs to 569 residues: Toxin YxiD (569 aa).

Residues 1–235 (MKTLDVHALH…NPQMKQADDS (235 aa)) form the LXG domain. The stretch at 8–91 (ALHEGIQHTI…QHAISSVESN (84 aa)) forms a coiled coil. Positions 548–569 (HQAGIHGTGSPANELFKGGKKK) are disordered.

In the N-terminal section; belongs to the LXG family. Probably interacts with cognate immunity protein YxxD but not with non-cognate immunity proteins. The interaction inhibits the toxic activity of YxxD.

The protein resides in the secreted. Functionally, toxic component of one of 6 LXG toxin-immunity modules in this strain. They promote kin selection, mediate competition in biofilms, and drive spatial segregation of different strains, indicating that LXG toxins may help avoid warfare between strains in biofilms. Mediates intercellular competition during biofilm formation; disruption of the operon disadvantages the bacteria, but overexpression of the cognate immunity protein restores growth in competition with wild-type. Overexpression alone in situ causes growth arrest but not cell lysis, a large decrease in chromosomal DNA content and the production of anucleate cells. No effect is seen on rRNA. Co-overexpression with cognate immunity protein YxxD does not cause growth arrest. The toxic effect is not dependent on the epsA and tapA operons which are required for biofilm formation. The protein is Toxin YxiD (yxiD) of Bacillus subtilis (strain 168).